A 583-amino-acid polypeptide reads, in one-letter code: Ribonuclease ZC3H12A (583 aa).

Positions 1–11 are enriched in basic and acidic residues; sequence MSLWELEDRRS. 2 disordered regions span residues 1-29 and 73-119; these read MSLW…EATT and GSAA…GSDL. Positions 15–29 are enriched in low complexity; that stretch reads TPRPAQEPTAEEATT. The ubiquitin association domain stretch occupies residues 26 to 71; the sequence is EATTAELQMKVDFFRKLGYSSAEIHSVLQKLGIQADTNTVLGELVK. The tract at residues 65–134 is necessary for interaction with TANK; that stretch reads VLGELVKHGS…DGSNVAMSHG (70 aa). Basic and acidic residues predominate over residues 73–82; sequence GSAAERERQA. A Phosphoserine modification is found at Ser-83. The interval 96–281 is RNase; sequence GGGTPKAPTV…LDNFLRKKPL (186 aa). Positions 119–274 constitute an RNase NYN domain; sequence LRPIVIDGSN…LGRHGPSLDN (156 aa). An RNA binding region spans residues 198-204; the sequence is RRVGGKR. Asp-210 serves as a coordination point for Mg(2+). 2 disordered regions span residues 262-290 and 323-404; these read DDPL…KQPC and ANAL…PSEW. A C3H1-type zinc finger spans residues 284–309; the sequence is EHKKQPCPYGRKCTYGIKCRFLHPER. Residues 285-441 are necessary for interaction with ZC3H12D; it reads HKKQPCPYGR…SELWGVRGGG (157 aa). Low complexity predominate over residues 341-352; it reads RPSPSSQPGSLP. A compositionally biased stretch (basic and acidic residues) spans 353-364; that stretch reads TEHEQCSPDRKK. Over residues 384–393 the composition is skewed to low complexity; the sequence is PTGRSLPPSG. Ser-422 and Ser-426 each carry phosphoserine. Positions 503–530 are disordered; it reads YQLPPPTQRLQEPQAPGPGADRGPWGGA.

This sequence belongs to the ZC3H12 family. Oligomer. Found in a deubiquitination complex with TANK, USP10 and ZC3H12A; this complex inhibits genotoxic stress- or interleukin-1-beta-mediated NF-kappaB activation by promoting IKBKG or TRAF6 deubiquitination. Interacts with IKBKG; this interaction increases in response to DNA damage. Interacts with TANK; this interaction increases in response to DNA damage and serves as a bridge to anchor both TANK and USP10 into a deubiquitinating complex. Interacts with TRAF6; this interaction increases in response to DNA damage and is stimulated by TANK. Interacts with USP10; this interaction increases in response to DNA damage and serves as a bridge to anchor both TANK and USP10 into a deubiquitinating complex. Interacts with ZC3H12D. Interacts with TNRC6A. Interacts with IKBKB/IKKB. Interacts with IKBKB/IKKB. Interacts with BTRC; the interaction occurs when ZC3H12A is phosphorylated in a IKBKB/IKKB-dependent manner. Interacts with IRAK1; this interaction increases the interaction between ZC3H12A and IKBKB/IKKB. Interacts with UPF1; this interaction occurs in a mRNA translationally active- and termination-dependent manner and is essential for ZC3H12A-mediated degradation of target mRNAs. Associates with ribosomes. Interacts with ubiquitin. It depends on Mg(2+) as a cofactor. Post-translationally, phosphorylated by IRAK1; phosphorylation is necessary for subsequent phosphorylation by the I-kappa-B-kinase (IKK) complex. Phosphorylated by I-kappa-B-kinase (IKK) subunits IKBKB/IKKB and CHUK/IKKA at Ser-422 and Ser-426; these phosphorylations promote ubiquitin proteasome-mediated degradation of ZC3H12A and hence facilitates rapid and robust production of IL-6 mRNA in response to toll-like receptor (TLR) or IL-1 receptor stimuli. Ubiquitinated; ubiquitination is induced in response to interleukin IL1 receptor stimuli in a IKBKB/IKKB and IRAK1-dependent manner, leading to proteasome-mediated degradation. In terms of processing, proteolytically cleaved between Arg-95 and Arg-198 by MALT1 in activated T-cells; cleavage at Arg-95 is critical for promoting ZC3H12A degradation in response to T-cell receptor (TCR) stimulation, and hence is necessary for prolonging the stability of a set of mRNAs controlling T-cell activation and Th17 cell differentiation.

It localises to the nucleus. The protein localises to the cytoplasm. Its subcellular location is the P-body. It is found in the rough endoplasmic reticulum membrane. The protein resides in the cytoplasmic granule. In terms of biological role, endoribonuclease involved in various biological functions such as cellular inflammatory response and immune homeostasis, glial differentiation of neuroprogenitor cells, cell death of cardiomyocytes, adipogenesis and angiogenesis. Functions as an endoribonuclease involved in mRNA decay. Modulates the inflammatory response by promoting the degradation of a set of translationally active cytokine-induced inflammation-related mRNAs, such as IL6 and IL12B, during the early phase of inflammation. Prevents aberrant T-cell-mediated immune reaction by degradation of multiple mRNAs controlling T-cell activation, such as those encoding cytokines (IL6 and IL2), cell surface receptors (ICOS, TNFRSF4 and TNFR2) and transcription factor (REL). Inhibits cooperatively with ZC3H12A the differentiation of helper T cells Th17 in lungs. They repress target mRNA encoding the Th17 cell-promoting factors IL6, ICOS, REL, IRF4, NFKBID and NFKBIZ. The cooperation requires RNA-binding by RC3H1 and the nuclease activity of ZC3H12A. Together with RC3H1, destabilizes TNFRSF4/OX40 mRNA by binding to the conserved stem loop structure in its 3'UTR. Self regulates by destabilizing its own mRNA. Cleaves mRNA harboring a stem-loop (SL), often located in their 3'-UTRs, during the early phase of inflammation in a helicase UPF1-dependent manner. Plays a role in the inhibition of microRNAs (miRNAs) biogenesis. Cleaves the terminal loop of a set of precursor miRNAs (pre-miRNAs) important for the regulation of the inflammatory response leading to their degradation, and thus preventing the biosynthesis of mature miRNAs. Also plays a role in promoting angiogenesis in response to inflammatory cytokines by inhibiting the production of antiangiogenic microRNAs via its anti-dicer RNase activity. Affects the overall ubiquitination of cellular proteins. Positively regulates deubiquitinase activity promoting the cleavage at 'Lys-48'- and 'Lys-63'-linked polyubiquitin chains on TNF receptor-associated factors (TRAFs), preventing JNK and NF-kappa-B signaling pathway activation, and hence negatively regulating macrophage-mediated inflammatory response and immune homeostasis. Also induces deubiquitination of the transcription factor HIF1A, probably leading to its stabilization and nuclear import, thereby positively regulating the expression of proangiogenic HIF1A-targeted genes. Involved in a TANK-dependent negative feedback response to attenuate NF-kappaB activation through the deubiquitination of IKBKG or TRAF6 in response to interleukin-1-beta (IL1B) stimulation or upon DNA damage. Prevents stress granules (SGs) formation and promotes macrophage apoptosis under stress conditions, including arsenite-induced oxidative stress, heat shock, and energy deprivation. Plays a role in the regulation of macrophage polarization; promotes IL4-induced polarization of macrophages M1 into anti-inflammatory M2 state. May also act as a transcription factor that regulates the expression of multiple genes involved in inflammatory response, angiogenesis, adipogenesis and apoptosis. Functions as a positive regulator of glial differentiation of neuroprogenitor cells through an amyloid precursor protein (APP)-dependent signaling pathway. Attenuates septic myocardial contractile dysfunction in response to lipopolysaccharide (LPS) by reducing I-kappa-B-kinase (IKK)-mediated NF-kappa-B activation, and hence myocardial pro-inflammatory cytokine production. This is Ribonuclease ZC3H12A from Bos taurus (Bovine).